Reading from the N-terminus, the 340-residue chain is Glycerol-3-phosphate dehydrogenase [NAD(P)+] (340 aa).

Residues Ser-13, Trp-14, and Lys-108 each coordinate NADPH. Sn-glycerol 3-phosphate-binding residues include Lys-108, Gly-139, and Ser-141. Ala-143 contacts NADPH. Sn-glycerol 3-phosphate contacts are provided by Lys-194, Asp-247, Ser-257, Arg-258, and Asn-259. Catalysis depends on Lys-194, which acts as the Proton acceptor. An NADPH-binding site is contributed by Arg-258. Residues Val-282 and Glu-284 each contribute to the NADPH site.

Belongs to the NAD-dependent glycerol-3-phosphate dehydrogenase family.

The protein localises to the cytoplasm. The catalysed reaction is sn-glycerol 3-phosphate + NAD(+) = dihydroxyacetone phosphate + NADH + H(+). It carries out the reaction sn-glycerol 3-phosphate + NADP(+) = dihydroxyacetone phosphate + NADPH + H(+). The protein operates within membrane lipid metabolism; glycerophospholipid metabolism. In terms of biological role, catalyzes the reduction of the glycolytic intermediate dihydroxyacetone phosphate (DHAP) to sn-glycerol 3-phosphate (G3P), the key precursor for phospholipid synthesis. In Streptococcus thermophilus (strain CNRZ 1066), this protein is Glycerol-3-phosphate dehydrogenase [NAD(P)+].